The following is a 482-amino-acid chain: L-propargylglycine--L-glutamate ligase (482 aa).

The enzyme catalyses L-propargylglycine + L-glutamate + ATP = L-gamma-glutamyl-L-propargylglycine + ADP + phosphate + H(+). It functions in the pathway amino-acid metabolism. It participates in antibiotic biosynthesis. Its function is as follows. Involved in the biosynthesis of terminal alkyne-containing amino acids such as L-beta-ethynylserine, that are produced as antibiotics by S.cattleya. Catalyzes the ATP-dependent ligation of L-propargylglycine to L-glutamate to form the dipeptide L-gamma-glutamyl-L-propargylglycine. Is selective for L-propargylglycine over norvaline, allylglycine and the standard proteinogenic amino acids, except L-cysteine which can be used as a substrate to a lesser extent. The protein is L-propargylglycine--L-glutamate ligase of Streptantibioticus cattleyicolor (strain ATCC 35852 / DSM 46488 / JCM 4925 / NBRC 14057 / NRRL 8057) (Streptomyces cattleya).